Reading from the N-terminus, the 650-residue chain is Amyloid beta precursor like protein 1 (650 aa).

A signal peptide spans 1–38 (MGPASPAARGLSRRPGQPPLPLLLPLLLLLLRAQPAIG). The Extracellular segment spans residues 39–580 (SLAGGSPGAA…APAGTGVSRE (542 aa)). The tract at residues 50-146 (APGSAQVAGL…PFRCLPGEFV (97 aa)) is GFLD subdomain. The E1 domain maps to 50-212 (APGSAQVAGL…RGVEYVCCPP (163 aa)). 6 disulfide bridges follow: cysteine 60-cysteine 84, cysteine 95-cysteine 140, cysteine 120-cysteine 128, cysteine 156-cysteine 210, cysteine 167-cysteine 197, and cysteine 181-cysteine 209. Positions 154-212 (EGCRFLHQERMDQCESSTRRHQEAQEACSSQGLILHGSGMLLPCGSDRFRGVEYVCCPP) are cuBD subdomain. Histidine 174 contacts Cu(2+). Residues glutamate 206, cysteine 209, and cysteine 210 each coordinate Zn(2+). The disordered stretch occupies residues 214 to 287 (GTPDPSGTAV…LAVVGKVTPT (74 aa)). O-linked (GalNAc...) threonine glycosylation occurs at threonine 215. Serine 227 carries O-linked (GalNAc...) serine glycosylation. O-linked (GalNAc...) threonine glycosylation is present at threonine 228. Residues 285-305 (TPTPRPTDGVDIYFGMPGEIS) are O-glycosylated at three sites. The region spanning 293-484 (GVDIYFGMPG…QELRPQIQEL (192 aa)) is the E2 domain. Heparin-binding stretches follow at residues 310–342 (FLRA…SKNL) and 410–441 (LLAL…DPEK). An N-linked (GlcNAc...) asparagine glycan is attached at asparagine 337. Residues 442-459 (AQQMRFQVHTHLQVIEER) form a collagen-binding region. N-linked (GlcNAc...) asparagine glycosylation is present at asparagine 461. The disordered stretch occupies residues 492–546 (PSELEAPAPGGSSEDKGGLQPPDSKDDTPMTLPKGSTEQDAASPEKEKMNPLEQY). Composition is skewed to basic and acidic residues over residues 504–519 (SEDK…KDDT) and 534–546 (SPEK…LEQY). A glycan (N-linked (GlcNAc...) asparagine) is linked at asparagine 551. Histidine 561 serves as a coordination point for Cu(2+). Histidine 561 lines the Zn(2+) pocket. A helical transmembrane segment spans residues 581–603 (AVSGLLIMGAGGGSLIVLSMLLL). Positions 604-615 (RRKKPYGAISHG) match the Basolateral sorting signal motif. The Cytoplasmic portion of the chain corresponds to 604–650 (RRKKPYGAISHGVVEVDPMLTLEEQQLRELQRHGYENPTYRFLEERP). An interaction with DAB1 region spans residues 632–649 (ELQRHGYENPTYRFLEER). Residues 636 to 650 (HGYENPTYRFLEERP) form an interaction with DAB2 region. Positions 640 to 643 (NPTY) match the Clathrin-binding motif. Positions 640-643 (NPTY) match the NPXY motif; contains endocytosis signal motif.

This sequence belongs to the APP family. As to quaternary structure, monomer and homodimer. Heparin binding promotes homodimerization. Binds, via its C-terminus, to the PID domain of several cytoplasmic proteins, including APBB and APBA family members, MAPK8IP1 and DAB1. Binding to Dab1 inhibits its serine phosphorylation. Interacts with CPEB1. Interacts (via NPXY motif) with DAB2 (via PID domain); the interaction is impaired by tyrosine phosphorylation of the NPXY motif. Interacts (via NPXY motif) with DAB1. In terms of processing, proteolytically cleaved by caspases during neuronal apoptosis. Cleaved, in vitro, at Asp-620 by caspase-3. N- and O-glycosylated. O-glycosylation with core 1 or possibly core 8 glycans. Glycosylation on Ser-227 is the preferred site to Thr-228. Expressed in the cerebral cortex where it is localized to the postsynaptic density (PSD).

It is found in the cell membrane. The protein resides in the cytoplasm. May play a role in postsynaptic function. The C-terminal gamma-secretase processed fragment, ALID1, activates transcription activation through APBB1 (Fe65) binding. Couples to JIP signal transduction through C-terminal binding. May interact with cellular G-protein signaling pathways. Can regulate neurite outgrowth through binding to components of the extracellular matrix such as heparin and collagen I. Its function is as follows. The gamma-CTF peptide, C30, is a potent enhancer of neuronal apoptosis. The polypeptide is Amyloid beta precursor like protein 1 (APLP1) (Homo sapiens (Human)).